The sequence spans 332 residues: UPF0194 membrane protein YbhG (332 aa).

The N-terminal stretch at 1–26 is a signal peptide; the sequence is MMKKPVVIELAVVVLAAVVAGGYWWY. Residues 108 to 209 are a coiled coil; it reads EEIAQAAAAV…LNLQDSTLIA (102 aa).

It belongs to the UPF0194 family.

The protein resides in the periplasm. The protein is UPF0194 membrane protein YbhG (ybhG) of Shigella sonnei (strain Ss046).